Here is a 92-residue protein sequence, read N- to C-terminus: Signal recognition particle 19 kDa protein (92 aa).

Belongs to the SRP19 family. In terms of assembly, part of the signal recognition particle protein translocation system, which is composed of SRP and FtsY. Archaeal SRP consists of a 7S RNA molecule of 300 nucleotides and two protein subunits: SRP54 and SRP19.

It is found in the cytoplasm. Functionally, involved in targeting and insertion of nascent membrane proteins into the cytoplasmic membrane. Binds directly to 7S RNA and mediates binding of the 54 kDa subunit of the SRP. The polypeptide is Signal recognition particle 19 kDa protein (Haloarcula marismortui (strain ATCC 43049 / DSM 3752 / JCM 8966 / VKM B-1809) (Halobacterium marismortui)).